Here is a 911-residue protein sequence, read N- to C-terminus: Golgin IMH1 (911 aa).

Disordered stretches follow at residues 16 to 41 (LAKG…SGLP) and 271 to 314 (KELP…ETVD). A coiled-coil region spans residues 101–280 (FFQDLNNKNN…KELPKAISHQ (180 aa)). A compositionally biased stretch (basic residues) spans 286-299 (NRRKKNRNKGKKNK). 2 positions are modified to phosphoserine: serine 308 and serine 660. Coiled-coil stretches lie at residues 312-735 (TVDN…ALKH) and 766-814 (SKAD…KERQ). Positions 814-850 (QYSDKSGRVSRSGSIGTLANANIDSSPANNSNPTKLE) are disordered. A compositionally biased stretch (polar residues) spans 822-847 (VSRSGSIGTLANANIDSSPANNSNPT). Serine 827 is subject to Phosphoserine. Threonine 830 carries the post-translational modification Phosphothreonine. In terms of domain architecture, GRIP spans 861–909 (DSEKNEKIAYIKNVLLGFLEHKEQRNQLLPVISMLLQLDSTDEKRLVMS).

As to quaternary structure, forms oligomers and is present in high-molecular-mass complexes. Interacts with ARL1.

It is found in the cytoplasm. Its subcellular location is the golgi apparatus membrane. Involved in vesicular transport between an endosomal compartment and the Golgi apparatus. The chain is Golgin IMH1 (IMH1) from Saccharomyces cerevisiae (strain ATCC 204508 / S288c) (Baker's yeast).